The following is a 314-amino-acid chain: Altered inheritance of mitochondria protein 6 homolog ARB_06966 (314 aa).

An N-terminal signal peptide occupies residues 1–21 (MKSSILASAAILAASLEPVAA). Residues Asn-91 and Asn-184 are each glycosylated (N-linked (GlcNAc...) asparagine).

The protein belongs to the AIM6 family.

The protein resides in the secreted. The chain is Altered inheritance of mitochondria protein 6 homolog ARB_06966 from Arthroderma benhamiae (strain ATCC MYA-4681 / CBS 112371) (Trichophyton mentagrophytes).